The following is a 353-amino-acid chain: Phosphate acyltransferase (353 aa).

It belongs to the PlsX family. As to quaternary structure, homodimer. Probably interacts with PlsY.

It localises to the cytoplasm. The enzyme catalyses a fatty acyl-[ACP] + phosphate = an acyl phosphate + holo-[ACP]. It participates in lipid metabolism; phospholipid metabolism. Catalyzes the reversible formation of acyl-phosphate (acyl-PO(4)) from acyl-[acyl-carrier-protein] (acyl-ACP). This enzyme utilizes acyl-ACP as fatty acyl donor, but not acyl-CoA. The chain is Phosphate acyltransferase from Nitrosospira multiformis (strain ATCC 25196 / NCIMB 11849 / C 71).